A 450-amino-acid polypeptide reads, in one-letter code: Phosphoglucosamine mutase (450 aa).

The active-site Phosphoserine intermediate is serine 104. 4 residues coordinate Mg(2+): serine 104, aspartate 243, aspartate 245, and aspartate 247. A Phosphoserine modification is found at serine 104.

This sequence belongs to the phosphohexose mutase family. It depends on Mg(2+) as a cofactor. Activated by phosphorylation.

It carries out the reaction alpha-D-glucosamine 1-phosphate = D-glucosamine 6-phosphate. Its function is as follows. Catalyzes the conversion of glucosamine-6-phosphate to glucosamine-1-phosphate. The protein is Phosphoglucosamine mutase of Cutibacterium acnes (strain DSM 16379 / KPA171202) (Propionibacterium acnes).